Reading from the N-terminus, the 297-residue chain is N-acetylmuramic acid 6-phosphate etherase (297 aa).

Positions 55–218 (AAKRYSKGGR…STGVMIKQGK (164 aa)) constitute an SIS domain. The active-site Proton donor is the glutamate 83. Glutamate 114 is a catalytic residue.

The protein belongs to the GCKR-like family. MurNAc-6-P etherase subfamily. Homodimer.

The enzyme catalyses N-acetyl-D-muramate 6-phosphate + H2O = N-acetyl-D-glucosamine 6-phosphate + (R)-lactate. It functions in the pathway amino-sugar metabolism; N-acetylmuramate degradation. Specifically catalyzes the cleavage of the D-lactyl ether substituent of MurNAc 6-phosphate, producing GlcNAc 6-phosphate and D-lactate. The chain is N-acetylmuramic acid 6-phosphate etherase from Lactobacillus gasseri (strain ATCC 33323 / DSM 20243 / BCRC 14619 / CIP 102991 / JCM 1131 / KCTC 3163 / NCIMB 11718 / NCTC 13722 / AM63).